Here is a 452-residue protein sequence, read N- to C-terminus: UDP-N-acetylmuramoylalanine--D-glutamate ligase (452 aa).

Gly115–Thr121 is a binding site for ATP.

The protein belongs to the MurCDEF family.

It is found in the cytoplasm. It carries out the reaction UDP-N-acetyl-alpha-D-muramoyl-L-alanine + D-glutamate + ATP = UDP-N-acetyl-alpha-D-muramoyl-L-alanyl-D-glutamate + ADP + phosphate + H(+). Its pathway is cell wall biogenesis; peptidoglycan biosynthesis. Cell wall formation. Catalyzes the addition of glutamate to the nucleotide precursor UDP-N-acetylmuramoyl-L-alanine (UMA). This chain is UDP-N-acetylmuramoylalanine--D-glutamate ligase, found in Citrifermentans bemidjiense (strain ATCC BAA-1014 / DSM 16622 / JCM 12645 / Bem) (Geobacter bemidjiensis).